Here is a 63-residue protein sequence, read N- to C-terminus: Chromatin protein Cren7 (63 aa).

This sequence belongs to the Cren7 family. In terms of assembly, monomer. In terms of processing, methylated at multiple sites, to varying extents.

It is found in the chromosome. The protein resides in the cytoplasm. Functionally, a chromatin protein, binds double-stranded DNA without sequence specificity. Constrains negative DNA supercoils. The protein is Chromatin protein Cren7 of Pyrobaculum calidifontis (strain DSM 21063 / JCM 11548 / VA1).